Here is a 100-residue protein sequence, read N- to C-terminus: Elicitin Vex2 (100 aa).

3 cysteine pairs are disulfide-bonded: cysteine 3-cysteine 71, cysteine 27-cysteine 56, and cysteine 51-cysteine 95.

Belongs to the elicitin family.

The protein localises to the secreted. Induces local and distal defense responses (incompatible hypersensitive reaction) in plants from the solanaceae and cruciferae families. Elicits leaf necrosis and causes the accumulation of pathogenesis-related proteins. Might interact with the lipidic molecules of the plasma membrane. The protein is Elicitin Vex2 of Phytopythium vexans (Damping-off fungus).